We begin with the raw amino-acid sequence, 390 residues long: MDSFKFIQKKILLLGSGELGKELVVEAKRLGLEVIAIDKYENAPAMQLADHSFVINMNDKKTLINTIKKIEPDFVVPEIEALSIEALKELEEEGINIVPNARTVEITMNRHKIRDLASKELNIKTANFSYVFNAEELEMKSSEIGFPLLLKPLMSSSGKGQSLVKRKEDLLLAWEDALKNSRGKIEGVILEEFLNFDYEFTLLTVRKSSGENVFCEPIGHEQYKGDYQCSWQPLDMNESLINEARNMTNKILNNLNGSGIYGVEFFVRGKEVIFSELSPRPHDTGMVTLVSQNLNEFELHLRAFLNLPIPKISLLKPSATRVILSEKESINPSYTGLNEALEVENTKVLIFGKPTSKKGRRMGVVLSSDDDLNIARKNADKSASKIKIVS.

Residues 18–19 (EL) and Glu-78 contribute to the N(1)-(5-phospho-beta-D-ribosyl)glycinamide site. ATP-binding positions include Arg-110, Lys-151, 156 to 161 (SSGKGQ), 191 to 194 (EEFL), and Glu-199. Residues 115-305 (DLASKELNIK…EFELHLRAFL (191 aa)) form the ATP-grasp domain. Mg(2+) contacts are provided by Glu-264 and Glu-276. N(1)-(5-phospho-beta-D-ribosyl)glycinamide contacts are provided by residues Asp-283, Lys-353, and 360–361 (RR).

The protein belongs to the PurK/PurT family. As to quaternary structure, homodimer.

It catalyses the reaction N(1)-(5-phospho-beta-D-ribosyl)glycinamide + formate + ATP = N(2)-formyl-N(1)-(5-phospho-beta-D-ribosyl)glycinamide + ADP + phosphate + H(+). The protein operates within purine metabolism; IMP biosynthesis via de novo pathway; N(2)-formyl-N(1)-(5-phospho-D-ribosyl)glycinamide from N(1)-(5-phospho-D-ribosyl)glycinamide (formate route): step 1/1. Its function is as follows. Involved in the de novo purine biosynthesis. Catalyzes the transfer of formate to 5-phospho-ribosyl-glycinamide (GAR), producing 5-phospho-ribosyl-N-formylglycinamide (FGAR). Formate is provided by PurU via hydrolysis of 10-formyl-tetrahydrofolate. The sequence is that of Formate-dependent phosphoribosylglycinamide formyltransferase from Prochlorococcus marinus (strain MIT 9515).